Reading from the N-terminus, the 996-residue chain is Oxysterol-binding protein homolog 3 (996 aa).

The tract at residues 1-183 (METIDIQNRS…KKKILFNASV (183 aa)) is GOLD domain. Residues 75 to 114 (GSSSNIEEHHRRSSQHSHSSSNGSDNKRKERSYSSLSISG) form a disordered region. Residues serine 190 and serine 193 each carry the phosphoserine modification. Threonine 210 carries the phosphothreonine modification. In terms of domain architecture, PH spans 221-315 (GRYLQGYLLK…WVDALQTCFD (95 aa)). Position 323 is a phosphothreonine (threonine 323). Serine 324 bears the Phosphoserine mark. Phosphothreonine is present on residues threonine 325 and threonine 352. A disordered region spans residues 338 to 372 (EVINKSSPQDHDHLTPTATTKSALSHRQHTQKDMD). Positions 514-520 (EFFDAEE) match the FFAT motif. The tract at residues 556-611 (KEVQLSGSEQIASSSVESYTTNDENHSRKHLKNRHKNRRRGHPHHQKTKSAQSSTE) is disordered. Residues 558-577 (VQLSGSEQIASSSVESYTTN) are compositionally biased toward polar residues. The span at 582–603 (SRKHLKNRHKNRRRGHPHHQKT) shows a compositional bias: basic residues. Serine 605 carries the post-translational modification Phosphoserine. Positions 642–982 (SLLSFLRKNV…YITGPKSYWE (341 aa)) are OSBP-related domain (ORD). A 1,2-diacyl-sn-glycero-3-phospho-(1D-myo-inositol 4-phosphate)-binding positions include 657-660 (SIAM), lysine 717, 745-746 (HR), and 945-949 (EQLQR).

This sequence belongs to the OSBP family. Interacts with SCS2.

It localises to the cytoplasm. Its subcellular location is the endoplasmic reticulum membrane. Lipid transport protein (LTP) involved in non-vesicular transfer of lipids between membranes. Functions in phosphoinositide-coupled directional transport of various lipids by carrying the lipid molecule in a hydrophobic pocket and transferring it between membranes through the cytosol. Involved in maintenance of intracellular sterol distribution and homeostasis. May serve as a sensor of PI4P levels at PM-ER membrane contact site, regulating PI4P phosphatase SAC1 activity. May be involved in ergosterol transport from the plasma membrane (PM) to the ER, however it does not bind sterols directly. Plays a role in the positive regulation of vesicular transport of ceramide from the ER to the Golgi, negatively regulating COPII-mediated ER export of cargos. The protein is Oxysterol-binding protein homolog 3 of Saccharomyces cerevisiae (strain ATCC 204508 / S288c) (Baker's yeast).